A 450-amino-acid polypeptide reads, in one-letter code: Interferon-related developmental regulator 1 (450 aa).

The span at 1–10 (MPKNKKRNTP) shows a compositional bias: basic residues. Positions 1 to 46 (MPKNKKRNTPHRGGSGGGGSGAAATTAATAGGQHRNVQPFSDEDAS) are disordered. A compositionally biased stretch (low complexity) spans 22–32 (AAATTAATAGG).

This sequence belongs to the IFRD family. Interacts with PSIP1/LEDGF.

Its function is as follows. Could play a role in regulating gene activity in the proliferative and/or differentiative pathways induced by NGF. May be an autocrine factor that attenuates or amplifies the initial ligand-induced signal. This chain is Interferon-related developmental regulator 1 (IFRD1), found in Sus scrofa (Pig).